The following is a 321-amino-acid chain: uncharacterized protein (321 aa).

This is an uncharacterized protein from Acanthamoeba polyphaga (Amoeba).